The chain runs to 61 residues: UPF0181 protein Ent638_2380 (61 aa).

Belongs to the UPF0181 family.

This Enterobacter sp. (strain 638) protein is UPF0181 protein Ent638_2380.